The chain runs to 365 residues: N-acetylgalactosamine-N,N'-diacetylbacillosaminyl-diphospho-undecaprenol 4-alpha-N-acetylgalactosaminyltransferase (365 aa).

It belongs to the glycosyltransferase group 1 family.

The protein localises to the cell inner membrane. It catalyses the reaction N-acetyl-alpha-D-galactosaminyl-(1-&gt;3)-N,N'-diacetyl-alpha-D-bacillosaminyl-tri-trans,hepta-cis-undecaprenyl diphosphate + UDP-N-acetyl-alpha-D-galactosamine = N-acetyl-alpha-D-galactosaminyl-(1-&gt;4)-N-acetyl-alpha-D-galactosaminyl-(1-&gt;3)-N,N'-diacetyl-alpha-D-bacillosaminyl-tri-trans,heptacis-undecaprenyl diphosphate + UDP + H(+). The protein operates within protein modification; protein glycosylation. Adds a GalNAc residue on to the Und-PP-Bac2,4diNAc-GalNAc disaccharide in the N-linked protein glycosylation pathway. Transfers the third sugar in the heptasaccharide biosynthesis. The protein is N-acetylgalactosamine-N,N'-diacetylbacillosaminyl-diphospho-undecaprenol 4-alpha-N-acetylgalactosaminyltransferase (pglJ) of Campylobacter jejuni subsp. jejuni serotype O:2 (strain ATCC 700819 / NCTC 11168).